The sequence spans 166 residues: Bile acid 7alpha-dehydratase (166 aa).

Homodimer.

The enzyme catalyses 7alpha,12alpha-dihydroxy-3-oxochol-4-en-24-oyl-CoA = 12alpha-hydroxy-3-oxochola-4,6-dien-24-oyl-CoA + H2O. It catalyses the reaction 7alpha-hydroxy-3-oxochol-4-en-24-oyl-CoA = 3-oxochol-4,6-dien-24-oyl-CoA + H2O. It carries out the reaction 7alpha,12alpha-dihydroxy-3-oxochol-4-en-24-oate = 12alpha-hydroxy-3-oxochola-4,6-dien-24-oate + H2O. The catalysed reaction is 7alpha-hydroxy-3-oxochol-4-en-24-oate = 3-oxochola-4,6-dien-24-oate + H2O. It participates in lipid metabolism; bile acid biosynthesis. Functionally, functions in the bile acid 7alpha-dehydroxylation pathway, which forms secondary bile acids via the 7alpha-dehydroxylation of primary bile acids, and is carried out by intestinal anaerobic bacteria. Catalyzes the dehydration step in this pathway, yielding a 3-oxo-Delta(4,6)-bile acid-CoA intermediate. In vitro, can act on the free bile acids (non CoA-conjugated) 7-alpha,12-alpha-dihydroxy-3-oxochol-4-enoate and 7-alpha-hydroxy-3-oxochol-4-enoate, but not on 7-alpha,12-alpha-dihydroxy-3-oxo-5-beta-cholanate, 3-alpha,7-alpha,12-alpha-trihydroxy-5-beta-cholanate or 7-beta-hydroxy-3-oxochol-4-enoate. The protein is Bile acid 7alpha-dehydratase of Clostridium scindens (strain JCM 10418 / VPI 12708).